The sequence spans 159 residues: Riboflavin kinase (159 aa).

Residue 38-43 (GLGEGR) participates in CDP binding. Positions 67 and 69 each coordinate Mg(2+). The FMN site is built by T126 and E134. 139–142 (HKLR) lines the CDP pocket.

Belongs to the archaeal riboflavin kinase family. It depends on Mg(2+) as a cofactor.

The catalysed reaction is riboflavin + CTP = CDP + FMN + H(+). The protein operates within cofactor biosynthesis; FMN biosynthesis; FMN from riboflavin (CTP route): step 1/1. Its function is as follows. Catalyzes the CTP-dependent phosphorylation of riboflavin (vitamin B2) to form flavin mononucleotide (FMN). This chain is Riboflavin kinase, found in Sulfolobus acidocaldarius (strain ATCC 33909 / DSM 639 / JCM 8929 / NBRC 15157 / NCIMB 11770).